A 500-amino-acid chain; its full sequence is Probable betaine aldehyde dehydrogenase (500 aa).

249–254 provides a ligand contact to NAD(+); it reads GSLATG. E271 functions as the Proton acceptor in the catalytic mechanism. C305 serves as the catalytic Nucleophile.

The protein belongs to the aldehyde dehydrogenase family.

The catalysed reaction is betaine aldehyde + NAD(+) + H2O = glycine betaine + NADH + 2 H(+). It participates in amine and polyamine biosynthesis; betaine biosynthesis via choline pathway; betaine from betaine aldehyde: step 1/1. In Schizosaccharomyces pombe (strain 972 / ATCC 24843) (Fission yeast), this protein is Probable betaine aldehyde dehydrogenase (meu8).